A 357-amino-acid chain; its full sequence is UDP-N-acetylglucosamine--N-acetylmuramyl-(pentapeptide) pyrophosphoryl-undecaprenol N-acetylglucosamine transferase (357 aa).

Residues 15 to 17, Asn123, Arg164, Ser190, and Gln284 contribute to the UDP-N-acetyl-alpha-D-glucosamine site; that span reads TGG.

Belongs to the glycosyltransferase 28 family. MurG subfamily.

Its subcellular location is the cell inner membrane. It catalyses the reaction di-trans,octa-cis-undecaprenyl diphospho-N-acetyl-alpha-D-muramoyl-L-alanyl-D-glutamyl-meso-2,6-diaminopimeloyl-D-alanyl-D-alanine + UDP-N-acetyl-alpha-D-glucosamine = di-trans,octa-cis-undecaprenyl diphospho-[N-acetyl-alpha-D-glucosaminyl-(1-&gt;4)]-N-acetyl-alpha-D-muramoyl-L-alanyl-D-glutamyl-meso-2,6-diaminopimeloyl-D-alanyl-D-alanine + UDP + H(+). It functions in the pathway cell wall biogenesis; peptidoglycan biosynthesis. Cell wall formation. Catalyzes the transfer of a GlcNAc subunit on undecaprenyl-pyrophosphoryl-MurNAc-pentapeptide (lipid intermediate I) to form undecaprenyl-pyrophosphoryl-MurNAc-(pentapeptide)GlcNAc (lipid intermediate II). The chain is UDP-N-acetylglucosamine--N-acetylmuramyl-(pentapeptide) pyrophosphoryl-undecaprenol N-acetylglucosamine transferase from Synechococcus elongatus (strain ATCC 33912 / PCC 7942 / FACHB-805) (Anacystis nidulans R2).